The primary structure comprises 385 residues: Succinate--CoA ligase [ADP-forming] subunit beta (385 aa).

One can recognise an ATP-grasp domain in the interval K9–E241. ATP-binding positions include K46, G53–G55, E99, T102, and E107. Mg(2+) is bound by residues N196 and D210. Substrate contacts are provided by residues N261 and G318–V320.

This sequence belongs to the succinate/malate CoA ligase beta subunit family. In terms of assembly, heterotetramer of two alpha and two beta subunits. It depends on Mg(2+) as a cofactor.

The enzyme catalyses succinate + ATP + CoA = succinyl-CoA + ADP + phosphate. It catalyses the reaction GTP + succinate + CoA = succinyl-CoA + GDP + phosphate. It functions in the pathway carbohydrate metabolism; tricarboxylic acid cycle; succinate from succinyl-CoA (ligase route): step 1/1. Succinyl-CoA synthetase functions in the citric acid cycle (TCA), coupling the hydrolysis of succinyl-CoA to the synthesis of either ATP or GTP and thus represents the only step of substrate-level phosphorylation in the TCA. The beta subunit provides nucleotide specificity of the enzyme and binds the substrate succinate, while the binding sites for coenzyme A and phosphate are found in the alpha subunit. The chain is Succinate--CoA ligase [ADP-forming] subunit beta from Campylobacter fetus subsp. fetus (strain 82-40).